The following is a 71-amino-acid chain: DNA-directed RNA polymerase subunit epsilon (71 aa).

Belongs to the RNA polymerase subunit epsilon family. RNAP is composed of a core of 2 alpha, a beta and a beta' subunit. The core is associated with a delta subunit, and at least one of epsilon or omega. When a sigma factor is associated with the core the holoenzyme is formed, which can initiate transcription.

It carries out the reaction RNA(n) + a ribonucleoside 5'-triphosphate = RNA(n+1) + diphosphate. Its function is as follows. A non-essential component of RNA polymerase (RNAP). The polypeptide is DNA-directed RNA polymerase subunit epsilon (Geobacillus kaustophilus (strain HTA426)).